Reading from the N-terminus, the 143-residue chain is Transcriptional regulator MraZ (143 aa).

SpoVT-AbrB domains are found at residues Glu-5–Glu-47 and Ala-76–Glu-119.

The protein belongs to the MraZ family. In terms of assembly, forms oligomers.

It localises to the cytoplasm. The protein resides in the nucleoid. The chain is Transcriptional regulator MraZ from Alkaliphilus oremlandii (strain OhILAs) (Clostridium oremlandii (strain OhILAs)).